Reading from the N-terminus, the 49-residue chain is Osteocalcin (49 aa).

In terms of domain architecture, Gla spans 1–47 (YLDHWLGAPAPYPDPLEPRREVCELNPDCDELADHIGFQEAYRRFYG). Position 9 is a hydroxyproline (P9). E17, E21, E24, and D30 together coordinate Ca(2+). 3 positions are modified to 4-carboxyglutamate: E17, E21, and E24. Cysteines 23 and 29 form a disulfide.

Belongs to the osteocalcin/matrix Gla protein family. In terms of processing, gamma-carboxyglutamate residues are formed by vitamin K dependent carboxylation by GGCX. These residues are essential for the binding of calcium. Decarboxylation promotes the hormone activity.

The protein resides in the secreted. Functionally, the carboxylated form is one of the main organic components of the bone matrix, which constitutes 1-2% of the total bone protein. It acts as a negative regulator of bone formation and is required to limit bone formation without impairing bone resorption or mineralization. The carboxylated form binds strongly to apatite and calcium. In terms of biological role, the uncarboxylated form acts as a hormone secreted by osteoblasts, which regulates different cellular processes, such as energy metabolism, male fertility and brain development. Regulates of energy metabolism by acting as a hormone favoring pancreatic beta-cell proliferation, insulin secretion and sensitivity and energy expenditure. Uncarboxylated osteocalcin hormone also promotes testosterone production in the testes: acts as a ligand for G protein-coupled receptor GPRC6A at the surface of Leydig cells, initiating a signaling response that promotes the expression of enzymes required for testosterone synthesis in a CREB-dependent manner. Also acts as a regulator of brain development: osteocalcin hormone crosses the blood-brain barrier and acts as a ligand for GPR158 on neurons, initiating a signaling response that prevents neuronal apoptosis in the hippocampus, favors the synthesis of all monoamine neurotransmitters and inhibits that of gamma-aminobutyric acid (GABA). Osteocalcin also crosses the placenta during pregnancy and maternal osteocalcin is required for fetal brain development. The protein is Osteocalcin (BGLAP) of Equus caballus (Horse).